Reading from the N-terminus, the 1148-residue chain is Small G protein signaling modulator 1 (1148 aa).

The RUN domain maps to 36–190 (HEDSSHIISF…EYTKMKTADH (155 aa)). Residues 256 to 297 (LLYGKNNVLVQPRDDMEAVPGYLSLHQTADVMTLKWTPNQLM) are important for interaction with RAB9A and RAB9B. Residues 301-350 (VGDLDYEKSVYWDYAMTIRLEEIVYLHCHQQVDSGGTVVLVSQDGIQRPP) form a required for interaction with RAP family members region. 3 disordered regions span residues 377-411 (DPPL…DKDD), 700-830 (DSTI…PREE), and 871-894 (GWRS…EEPE). Residues 385-397 (GKGKVFPKLRKRS) show a composition bias toward basic residues. Residues 617–1081 (GIQPEIRKAV…LVWETIWAAK (465 aa)) enclose the Rab-GAP TBC domain. The segment covering 702-716 (TISNESSQSCSSGRQ) has biased composition (polar residues). Basic and acidic residues predominate over residues 742 to 751 (AEGRLEEKQP). Positions 757–802 (NLVNGTCSPDSGHPSSHNFSSGLSEHSEPSLSTEDSVLDAQRNTPT) are enriched in polar residues. Basic and acidic residues-rich tracts occupy residues 805-816 (RPRDGSVDDRQS) and 871-883 (GWRS…HGQA). The span at 884-894 (DSEDNLSEEPE) shows a compositional bias: acidic residues.

This sequence belongs to the RUTBC family. Interacts with RAB9A (GTP-bound form) and RAB9B (GTP-bound form); has much lower affinity for GDP-bound RAB9A and RAB9B. Interacts with RAB3A, RAB4A, RAB5A, RAB8A, RAB11A, RAP1A, RAP1B, RAP2A and RAP2B. No interaction with RAB27A. As to expression, mainly expressed in brain, heart and testis.

The protein localises to the golgi apparatus. Its subcellular location is the trans-Golgi network. It localises to the cytoplasmic vesicle membrane. The protein resides in the cytoplasm. Functionally, interacts with numerous Rab family members, functioning as Rab effector for some, and as GTPase activator for others. Promotes GTP hydrolysis by RAB34 and RAB36. Probably functions as a GTPase effector with RAB9A and RAB9B; does not stimulate GTP hydrolysis with RAB9A and RAB9B. This chain is Small G protein signaling modulator 1 (SGSM1), found in Homo sapiens (Human).